Reading from the N-terminus, the 746-residue chain is Polyphosphate kinase (746 aa).

The span at 1–17 (MRQPNTQAEAQHTQPSV) shows a compositional bias: polar residues. Residues 1-60 (MRQPNTQAEAQHTQPSVGSIAAHRPNTVAATVSGLEPDIDADLDAYEESEESQDGGARLP) form a disordered region. The segment covering 37–53 (PDIDADLDAYEESEESQ) has biased composition (acidic residues). ATP is bound at residue Asn-102. 2 residues coordinate Mg(2+): Arg-429 and Arg-459. His-489 serves as the catalytic Phosphohistidine intermediate. Residues Tyr-522, Arg-618, and His-646 each contribute to the ATP site.

The protein belongs to the polyphosphate kinase 1 (PPK1) family. The cofactor is Mg(2+). Post-translationally, an intermediate of this reaction is the autophosphorylated ppk in which a phosphate is covalently linked to a histidine residue through a N-P bond.

It catalyses the reaction [phosphate](n) + ATP = [phosphate](n+1) + ADP. Catalyzes the reversible transfer of the terminal phosphate of ATP to form a long-chain polyphosphate (polyP). In Streptomyces coelicolor (strain ATCC BAA-471 / A3(2) / M145), this protein is Polyphosphate kinase.